The chain runs to 144 residues: Phosphomevalonate dehydratase small subunit (144 aa).

S65 acts as the Proton acceptor in catalysis.

The protein belongs to the AcnX type II small subunit family. In terms of assembly, heterodimer composed of a large subunit (PMDh-L) and a small subunit (PMDh-S).

It carries out the reaction (R)-5-phosphomevalonate = (2E)-3-methyl-5-phosphooxypent-2-enoate + H2O. It participates in isoprenoid biosynthesis; isopentenyl diphosphate biosynthesis via mevalonate pathway. Its function is as follows. Component of a hydro-lyase that catalyzes the dehydration of mevalonate 5-phosphate (MVA5P) to form trans-anhydromevalonate 5-phosphate (tAHMP). Involved in the archaeal mevalonate (MVA) pathway, which provides fundamental precursors for isoprenoid biosynthesis, such as isopentenyl diphosphate (IPP) and dimethylallyl diphosphate (DMAPP). This chain is Phosphomevalonate dehydratase small subunit, found in Methanosarcina mazei (strain ATCC BAA-159 / DSM 3647 / Goe1 / Go1 / JCM 11833 / OCM 88) (Methanosarcina frisia).